The chain runs to 184 residues: ATP-dependent protease subunit HslV (184 aa).

The active site involves T12. Na(+)-binding residues include A166, C169, and T172.

This sequence belongs to the peptidase T1B family. HslV subfamily. In terms of assembly, a double ring-shaped homohexamer of HslV is capped on each side by a ring-shaped HslU homohexamer. The assembly of the HslU/HslV complex is dependent on binding of ATP.

The protein resides in the cytoplasm. It carries out the reaction ATP-dependent cleavage of peptide bonds with broad specificity.. Its activity is regulated as follows. Allosterically activated by HslU binding. Its function is as follows. Protease subunit of a proteasome-like degradation complex believed to be a general protein degrading machinery. The chain is ATP-dependent protease subunit HslV from Brucella canis (strain ATCC 23365 / NCTC 10854 / RM-666).